We begin with the raw amino-acid sequence, 151 residues long: 3-hydroxyacyl-[acyl-carrier-protein] dehydratase FabZ (151 aa).

Residue histidine 53 is part of the active site.

Belongs to the thioester dehydratase family. FabZ subfamily.

Its subcellular location is the cytoplasm. The catalysed reaction is a (3R)-hydroxyacyl-[ACP] = a (2E)-enoyl-[ACP] + H2O. Involved in unsaturated fatty acids biosynthesis. Catalyzes the dehydration of short chain beta-hydroxyacyl-ACPs and long chain saturated and unsaturated beta-hydroxyacyl-ACPs. In Erythrobacter litoralis (strain HTCC2594), this protein is 3-hydroxyacyl-[acyl-carrier-protein] dehydratase FabZ.